Reading from the N-terminus, the 371-residue chain is Fe(3+) ions import ATP-binding protein FbpC (371 aa).

The 231-residue stretch at 5-235 (IKIENAQKRY…PANLFVATFI (231 aa)) folds into the ABC transporter domain. 37–44 (GPSGCGKT) lines the ATP pocket.

This sequence belongs to the ABC transporter superfamily. Fe(3+) ion importer (TC 3.A.1.10) family. The complex is composed of two ATP-binding proteins (FbpC), two transmembrane proteins (FbpB) and a solute-binding protein (FbpA).

The protein localises to the cell inner membrane. It catalyses the reaction Fe(3+)(out) + ATP + H2O = Fe(3+)(in) + ADP + phosphate + H(+). Part of the ABC transporter complex FbpABC involved in Fe(3+) ions import. Responsible for energy coupling to the transport system. The chain is Fe(3+) ions import ATP-binding protein FbpC from Fusobacterium nucleatum subsp. nucleatum (strain ATCC 25586 / DSM 15643 / BCRC 10681 / CIP 101130 / JCM 8532 / KCTC 2640 / LMG 13131 / VPI 4355).